Here is a 278-residue protein sequence, read N- to C-terminus: S-formylglutathione hydrolase YeiG (278 aa).

Catalysis depends on charge relay system residues S145, D223, and H256.

Belongs to the esterase D family.

The catalysed reaction is S-formylglutathione + H2O = formate + glutathione + H(+). Serine hydrolase involved in the detoxification of formaldehyde. Hydrolyzes S-formylglutathione to glutathione and formate. This is S-formylglutathione hydrolase YeiG (yeiG) from Escherichia coli (strain UTI89 / UPEC).